Consider the following 265-residue polypeptide: MSSDHEEDSLYGATELFGEPDGFYEKPAESHFAEYERSAVPAQSARRDTQVRIRLVGSSPLWGHLLWNSAIYTARHLDAHPEQVVGRCVLELGAAGALPSLVAGLLGARQVVATDYPDADLVGNIQYNVDHVIYGGKPPTEAPHVAVEGYIWGNDYGPLRRHLPPGQTGFDLVLLSDLVFNHTEHHKLLQTTRDLLAPAGRALVVFSPHRPWLLEKDLQFFETAAEYGLRAELIEQVTWAPMFADDPGPAEVRARVYAYYLTHCA.

The disordered stretch occupies residues methionine 1–glutamate 25. S-adenosyl-L-methionine-binding positions include tryptophan 67, glycine 93 to alanine 95, aspartate 115, tryptophan 152, and serine 176.

The protein belongs to the class I-like SAM-binding methyltransferase superfamily. EFM7 family.

The protein resides in the cytoplasm. Its function is as follows. S-adenosyl-L-methionine-dependent protein methyltransferase that trimethylates the N-terminal glycine 'Gly-2' of elongation factor 1-alpha, before also catalyzing the mono- and dimethylation of 'Lys-3'. This chain is Protein N-terminal and lysine N-methyltransferase EFM7, found in Eremothecium gossypii (strain ATCC 10895 / CBS 109.51 / FGSC 9923 / NRRL Y-1056) (Yeast).